Here is a 99-residue protein sequence, read N- to C-terminus: Plastocyanin (99 aa).

Positions 1–99 constitute a Plastocyanin-like domain; sequence IEILLGGDDG…AGMVGKVTVN (99 aa). Residues H37, C84, H87, and M92 each coordinate Cu cation.

Belongs to the plastocyanin family. Requires Cu(2+) as cofactor.

It is found in the plastid. The protein resides in the chloroplast thylakoid membrane. In terms of biological role, participates in electron transfer between P700 and the cytochrome b6-f complex in photosystem I. This Cucumis sativus (Cucumber) protein is Plastocyanin (PETE).